The following is a 380-amino-acid chain: Endo-chitosanase C (380 aa).

Residues 1–22 (MPIKSFASRLALSLAICGTAMG) form the signal peptide. One copy of the R3-1 repeat lies at 276-304 (CSWPGHCAGATCSSNDDCSDDLTCQNGKC). An R3-2 repeat occupies 311–341 (ETCSWEGHCKGATCSSNDDCSDELACISGIC). Residues 348–378 (ETCEWEGHCEGASCSSHDDCDGNLACKNGKC) form an R3-3 repeat.

Belongs to the glycosyl hydrolase 75 family.

It is found in the secreted. It carries out the reaction Endohydrolysis of beta-(1-&gt;4)-linkages between D-glucosamine residues in a partly acetylated chitosan.. Chitosanase catalyzing the endo-type cleavage of chitosan, the deacylated form of chitin. Chitosanase may be crucial in the degradation of the deacetylated portion of chitin in the fungal cell wall. Chitoolisaccharides produced by the hydrolysis of partially N-acetylated chitosan are known to have many biological activities, including antibacterial activity, immune-enhancing effects, and elicitor activity. The sequence is that of Endo-chitosanase C (csnC) from Aspergillus oryzae (Yellow koji mold).